A 427-amino-acid polypeptide reads, in one-letter code: UDP-N-acetylglucosamine 1-carboxyvinyltransferase (427 aa).

Residue K22 to N23 participates in phosphoenolpyruvate binding. R92 serves as a coordination point for UDP-N-acetyl-alpha-D-glucosamine. The active-site Proton donor is the D116. D312 and M334 together coordinate UDP-N-acetyl-alpha-D-glucosamine.

It belongs to the EPSP synthase family. MurA subfamily.

The protein resides in the cytoplasm. It carries out the reaction phosphoenolpyruvate + UDP-N-acetyl-alpha-D-glucosamine = UDP-N-acetyl-3-O-(1-carboxyvinyl)-alpha-D-glucosamine + phosphate. It functions in the pathway cell wall biogenesis; peptidoglycan biosynthesis. Cell wall formation. Adds enolpyruvyl to UDP-N-acetylglucosamine. This chain is UDP-N-acetylglucosamine 1-carboxyvinyltransferase, found in Borrelia garinii subsp. bavariensis (strain ATCC BAA-2496 / DSM 23469 / PBi) (Borreliella bavariensis).